A 61-amino-acid polypeptide reads, in one-letter code: Short neurotoxin 1 (61 aa).

Positions 1 to 16 (LECHNQQSSQPPTTKS) are enriched in polar residues. The tract at residues 1–20 (LECHNQQSSQPPTTKSCPGD) is disordered. Disulfide bonds link Cys3–Cys23, Cys17–Cys40, Cys42–Cys53, and Cys54–Cys59.

The protein belongs to the three-finger toxin family. Short-chain subfamily. Type I alpha-neurotoxin sub-subfamily. As to expression, expressed by the venom gland.

It is found in the secreted. Functionally, binds to muscle nicotinic acetylcholine receptor (nAChR) and inhibit acetylcholine from binding to the receptor, thereby impairing neuromuscular transmission. The protein is Short neurotoxin 1 of Hemachatus haemachatus (Rinkhals).